Consider the following 495-residue polypeptide: UDP-glycosyltransferase 1 (495 aa).

His-24 acts as the Proton acceptor in catalysis. Position 24 (His-24) interacts with an anthocyanidin. The active-site Charge relay is the Asp-129. Residues Gln-358, His-373, Trp-376, Asn-377, Ser-378, and Glu-381 each contribute to the UDP-alpha-D-glucose site. Gly-396 is an an anthocyanidin binding site. 2 residues coordinate UDP-alpha-D-glucose: Asp-397 and Gln-398.

It belongs to the UDP-glycosyltransferase family.

It catalyses the reaction oleanolate + UDP-alpha-D-glucose = oleanolate 3-O-beta-D-glucoside + UDP + H(+). Catalyzes the transfer of a glucose (Glc) moiety from UDP-Glc to the C-3 position of the oleanane sapogenins oleanolate and hederagenin. The monoglucosylated hederagenin 3-O-beta-D-glucoside is a feeding deterrent of the yellow-striped flea beetle (Phyllotreta nemorum). The polypeptide is UDP-glycosyltransferase 1 (Barbarea vulgaris (Yellow rocket)).